The following is a 214-amino-acid chain: uncharacterized protein (214 aa).

Belongs to the uracil-DNA glycosylase (UDG) superfamily.

This is an uncharacterized protein from Haemophilus influenzae (strain ATCC 51907 / DSM 11121 / KW20 / Rd).